The primary structure comprises 263 residues: Peptide methionine sulfoxide reductase A4, chloroplastic (263 aa).

A chloroplast-targeting transit peptide spans 1–75 (MPPLLASTSS…GLGGLGGSPR (75 aa)).

Belongs to the MsrA Met sulfoxide reductase family. Expressed in roots, stems, leaves and flowers.

The protein localises to the plastid. It is found in the chloroplast. It carries out the reaction L-methionyl-[protein] + [thioredoxin]-disulfide + H2O = L-methionyl-(S)-S-oxide-[protein] + [thioredoxin]-dithiol. The catalysed reaction is [thioredoxin]-disulfide + L-methionine + H2O = L-methionine (S)-S-oxide + [thioredoxin]-dithiol. In terms of biological role, catalyzes the reduction of methionine sulfoxide (MetSO) to methionine in proteins. Involved in abiotic and salt stress responses. Plays a protective role against oxidative stress by restoring activity to proteins that have been inactivated by methionine oxidation. MSRA family specifically reduces the MetSO S-enantiomer. The protein is Peptide methionine sulfoxide reductase A4, chloroplastic of Oryza sativa subsp. japonica (Rice).